We begin with the raw amino-acid sequence, 397 residues long: Na(+)/H(+) antiporter NhaA 3 (397 aa).

The next 11 helical transmembrane spans lie at 18–38 (AGGI…NSPF), 63–83 (LLLW…GLEL), 98–118 (IALP…IYWW), 129–149 (GWAI…ALLG), 158–178 (IFLT…IAFF), 181–201 (SKIS…LFIC), 207–224 (TTLR…VALL), 269–289 (VAFL…FIGM), 306–326 (LFFG…LFGW), 340–360 (GVAV…SLAF), and 373–393 (LGIV…LRSA).

This sequence belongs to the NhaA Na(+)/H(+) (TC 2.A.33) antiporter family.

It localises to the cell inner membrane. It catalyses the reaction Na(+)(in) + 2 H(+)(out) = Na(+)(out) + 2 H(+)(in). Its function is as follows. Na(+)/H(+) antiporter that extrudes sodium in exchange for external protons. This is Na(+)/H(+) antiporter NhaA 3 from Saccharophagus degradans (strain 2-40 / ATCC 43961 / DSM 17024).